The primary structure comprises 786 residues: Ribosome biogenesis protein BOP1 homolog (786 aa).

Basic residues predominate over residues 1–11; it reads MTKKLTIKRKV. Residues 1–161 are disordered; the sequence is MTKKLTIKRK…DSDTSDEEDI (161 aa). 4 stretches are compositionally biased toward acidic residues: residues 28 to 37, 46 to 55, 62 to 74, and 86 to 103; these read DNEEEEEEDL, EDSTDDEGID, SSED…DEEG, and SGDD…EDDA. Positions 104–113 are enriched in basic and acidic residues; it reads DAKKSSKNND. The span at 151–160 shows a compositional bias: acidic residues; that stretch reads ADSDTSDEED. 7 WD repeats span residues 447–488, 490–528, 572–614, 617–655, 658–697, 701–740, and 756–786; these read GHTD…RTIE, EDVV…KLLV, THFK…SQIP, KSKG…LIKK, TNSK…KPYQ, LHRN…DLLQ, and REEF…RLFT.

This sequence belongs to the WD repeat BOP1/ERB1 family.

The protein localises to the nucleus. The protein resides in the nucleolus. Its subcellular location is the nucleoplasm. Its function is as follows. Required for maturation of ribosomal RNAs and formation of the large ribosomal subunit. The chain is Ribosome biogenesis protein BOP1 homolog from Drosophila pseudoobscura pseudoobscura (Fruit fly).